The primary structure comprises 132 residues: NADPH-dependent 7-cyano-7-deazaguanine reductase (132 aa).

Cys-34 serves as the catalytic Thioimide intermediate. The Proton donor role is filled by Asp-41. Residues 56-58 (IEL) and 75-76 (HE) contribute to the substrate site.

Belongs to the GTP cyclohydrolase I family. QueF type 1 subfamily.

It localises to the cytoplasm. The enzyme catalyses 7-aminomethyl-7-carbaguanine + 2 NADP(+) = 7-cyano-7-deazaguanine + 2 NADPH + 3 H(+). It participates in tRNA modification; tRNA-queuosine biosynthesis. Functionally, catalyzes the NADPH-dependent reduction of 7-cyano-7-deazaguanine (preQ0) to 7-aminomethyl-7-deazaguanine (preQ1). In Vesicomyosocius okutanii subsp. Calyptogena okutanii (strain HA), this protein is NADPH-dependent 7-cyano-7-deazaguanine reductase.